A 514-amino-acid polypeptide reads, in one-letter code: Cytidine and dCMP deaminase domain-containing protein 1 (514 aa).

2 stretches are compositionally biased toward polar residues: residues 1 to 11 (MKEAGQMQNLE) and 18 to 27 (SVSTQTGSMT). 2 disordered regions span residues 1–27 (MKEA…GSMT) and 55–83 (RQKS…TDKR). Basic and acidic residues predominate over residues 59 to 83 (QKNEEGKHGPLGDNEERTRVSTDKR). In terms of domain architecture, CMP/dCMP-type deaminase 1 spans 70–168 (GDNEERTRVS…SLLTEASSSE (99 aa)). Residues histidine 109, cysteine 134, and cysteine 137 each coordinate Zn(2+). Residues 271–283 (NLRQNMKDLILLL) carry the Nuclear export signal motif. The region spanning 317–482 (EIARHCMVQA…LNPSGAYGLE (166 aa)) is the CMP/dCMP-type deaminase 2 domain. A Zn(2+)-binding site is contributed by histidine 398. The active-site Proton donor is glutamate 400. 2 residues coordinate Zn(2+): cysteine 426 and cysteine 429. The disordered stretch occupies residues 480–514 (GLEQNEPERRENGVLRPVPQKEEQHQDKKLRLGIH). Over residues 485–514 (EPERRENGVLRPVPQKEEQHQDKKLRLGIH) the composition is skewed to basic and acidic residues. The Bipartite nuclear localization signal motif lies at 488 to 510 (RRENGVLRPVPQKEEQHQDKKLR).

This sequence belongs to the cytidine and deoxycytidylate deaminase family. It depends on Zn(2+) as a cofactor. As to expression, widely expressed. Expressed at high levels in the testis.

The protein resides in the cytoplasm. It is found in the nucleus. The enzyme catalyses 2'-deoxycytidine + H2O + H(+) = 2'-deoxyuridine + NH4(+). It catalyses the reaction cytidine + H2O + H(+) = uridine + NH4(+). Functionally, catalyzes the deamination of cytidine and deoxycytidine into uridine and deoxyuridine, respectively. May play an important role in testicular development and spermatogenesis. This chain is Cytidine and dCMP deaminase domain-containing protein 1 (CDADC1), found in Homo sapiens (Human).